A 93-amino-acid chain; its full sequence is Co-chaperonin GroES (93 aa).

Belongs to the GroES chaperonin family. Heptamer of 7 subunits arranged in a ring. Interacts with the chaperonin GroEL.

It localises to the cytoplasm. Together with the chaperonin GroEL, plays an essential role in assisting protein folding. The GroEL-GroES system forms a nano-cage that allows encapsulation of the non-native substrate proteins and provides a physical environment optimized to promote and accelerate protein folding. GroES binds to the apical surface of the GroEL ring, thereby capping the opening of the GroEL channel. The polypeptide is Co-chaperonin GroES (Streptococcus gordonii (strain Challis / ATCC 35105 / BCRC 15272 / CH1 / DL1 / V288)).